We begin with the raw amino-acid sequence, 348 residues long: Phosphoribosylformylglycinamidine cyclo-ligase (348 aa).

The protein belongs to the AIR synthase family.

The protein resides in the cytoplasm. The catalysed reaction is 2-formamido-N(1)-(5-O-phospho-beta-D-ribosyl)acetamidine + ATP = 5-amino-1-(5-phospho-beta-D-ribosyl)imidazole + ADP + phosphate + H(+). The protein operates within purine metabolism; IMP biosynthesis via de novo pathway; 5-amino-1-(5-phospho-D-ribosyl)imidazole from N(2)-formyl-N(1)-(5-phospho-D-ribosyl)glycinamide: step 2/2. The chain is Phosphoribosylformylglycinamidine cyclo-ligase from Cereibacter sphaeroides (strain ATCC 17029 / ATH 2.4.9) (Rhodobacter sphaeroides).